The sequence spans 471 residues: UDP-N-acetylmuramate--L-alanine ligase (471 aa).

112-118 is a binding site for ATP; sequence GTHGKTT.

This sequence belongs to the MurCDEF family.

It is found in the cytoplasm. The enzyme catalyses UDP-N-acetyl-alpha-D-muramate + L-alanine + ATP = UDP-N-acetyl-alpha-D-muramoyl-L-alanine + ADP + phosphate + H(+). It participates in cell wall biogenesis; peptidoglycan biosynthesis. Cell wall formation. In Aromatoleum aromaticum (strain DSM 19018 / LMG 30748 / EbN1) (Azoarcus sp. (strain EbN1)), this protein is UDP-N-acetylmuramate--L-alanine ligase.